Consider the following 1017-residue polypeptide: Fanconi-associated nuclease 1 (1017 aa).

Residues 1–10 (MMSEGKPPDK) show a composition bias toward basic and acidic residues. The segment at 1–23 (MMSEGKPPDKKRPRRSLSISKNK) is disordered. The segment covering 11 to 23 (KRPRRSLSISKNK) has biased composition (basic residues). The D-box motif lies at 14–22 (RRSLSISKN). Residues 41-69 (KLACPVCSKMVPRYDLNRHLDEMCANNDF) form a UBZ4-type zinc finger. 4 residues coordinate Zn(2+): C44, C47, H59, and C64. 2 disordered regions span residues 95–121 (EDVT…KREV) and 170–189 (IDKD…STVV). Residues 179 to 189 (SSPQSSKSTVV) show a composition bias toward polar residues. S180 bears the Phosphoserine mark. The KEN box signature appears at 212–214 (KEN). Residues 671–696 (SRFVEILQRLHMYEEAVRELESLLSQ) adopt a coiled-coil conformation. Mn(2+) contacts are provided by E834, D960, E975, and V976. One can recognise a VRR-NUC domain in the interval 895 to 1007 (EESLRAWVAA…GAEVEVCHVV (113 aa)).

This sequence belongs to the FAN1 family. In terms of assembly, interacts with FANCD2 (when monoubiquitinated). Interacts with FANCI, MLH1, MLH3 and PMS2. It depends on Mn(2+) as a cofactor. Mg(2+) serves as cofactor. Ubiquitinated and degraded during mitotic exit by the APC/C-Cdh1 complex.

The protein localises to the nucleus. The catalysed reaction is Hydrolytically removes 5'-nucleotides successively from the 3'-hydroxy termini of 3'-hydroxy-terminated oligonucleotides.. Functionally, nuclease required for the repair of DNA interstrand cross-links (ICL) recruited at sites of DNA damage by monoubiquitinated FANCD2. Specifically involved in repair of ICL-induced DNA breaks by being required for efficient homologous recombination, probably in the resolution of homologous recombination intermediates. Not involved in DNA double-strand breaks resection. Acts as a 5'-3' exonuclease that anchors at a cut end of DNA and cleaves DNA successively at every third nucleotide, allowing to excise an ICL from one strand through flanking incisions. Probably keeps excising with 3'-flap annealing until it reaches and unhooks the ICL. Acts at sites that have a 5'-terminal phosphate anchor at a nick or a 1- or 2-nucleotide flap and is augmented by a 3' flap. Also has endonuclease activity toward 5'-flaps. The polypeptide is Fanconi-associated nuclease 1 (Homo sapiens (Human)).